Consider the following 436-residue polypeptide: Gamma-glutamyl phosphate reductase (436 aa).

Belongs to the gamma-glutamyl phosphate reductase family.

It is found in the cytoplasm. It carries out the reaction L-glutamate 5-semialdehyde + phosphate + NADP(+) = L-glutamyl 5-phosphate + NADPH + H(+). It functions in the pathway amino-acid biosynthesis; L-proline biosynthesis; L-glutamate 5-semialdehyde from L-glutamate: step 2/2. Catalyzes the NADPH-dependent reduction of L-glutamate 5-phosphate into L-glutamate 5-semialdehyde and phosphate. The product spontaneously undergoes cyclization to form 1-pyrroline-5-carboxylate. The protein is Gamma-glutamyl phosphate reductase of Prochlorococcus marinus (strain MIT 9215).